Consider the following 178-residue polypeptide: ATP synthase subunit delta (178 aa).

Belongs to the ATPase delta chain family. In terms of assembly, F-type ATPases have 2 components, F(1) - the catalytic core - and F(0) - the membrane proton channel. F(1) has five subunits: alpha(3), beta(3), gamma(1), delta(1), epsilon(1). F(0) has three main subunits: a(1), b(2) and c(10-14). The alpha and beta chains form an alternating ring which encloses part of the gamma chain. F(1) is attached to F(0) by a central stalk formed by the gamma and epsilon chains, while a peripheral stalk is formed by the delta and b chains.

Its subcellular location is the cell membrane. Its function is as follows. F(1)F(0) ATP synthase produces ATP from ADP in the presence of a proton or sodium gradient. F-type ATPases consist of two structural domains, F(1) containing the extramembraneous catalytic core and F(0) containing the membrane proton channel, linked together by a central stalk and a peripheral stalk. During catalysis, ATP synthesis in the catalytic domain of F(1) is coupled via a rotary mechanism of the central stalk subunits to proton translocation. In terms of biological role, this protein is part of the stalk that links CF(0) to CF(1). It either transmits conformational changes from CF(0) to CF(1) or is implicated in proton conduction. The chain is ATP synthase subunit delta from Streptococcus equi subsp. zooepidemicus (strain H70).